A 261-amino-acid polypeptide reads, in one-letter code: Kallikrein 1-related peptidase b11 (261 aa).

The N-terminal stretch at 1-18 is a signal peptide; sequence MWFLILFLALSLGGIDAA. A propeptide spans 19–24 (activation peptide); sequence PPVQSR. Residues 25–258 enclose the Peptidase S1 domain; sequence IVGGFNCEKN…FTNWIKDTMA (234 aa). Disulfide bonds link Cys-31/Cys-173, Cys-50/Cys-66, Cys-152/Cys-219, Cys-184/Cys-198, and Cys-209/Cys-234. Residue His-65 is the Charge relay system of the active site. Residue Asn-102 is glycosylated (N-linked (GlcNAc...) asparagine). The active-site Charge relay system is the Asp-120. Ser-213 serves as the catalytic Charge relay system.

This sequence belongs to the peptidase S1 family. Kallikrein subfamily.

It carries out the reaction Preferential cleavage of Arg-|-Xaa bonds in small molecule substrates. Highly selective action to release kallidin (lysyl-bradykinin) from kininogen involves hydrolysis of Met-|-Xaa or Leu-|-Xaa.. Functionally, glandular kallikreins cleave Met-Lys and Arg-Ser bonds in kininogen to release Lys-bradykinin. This is Kallikrein 1-related peptidase b11 (Klk1b11) from Mus musculus (Mouse).